A 703-amino-acid chain; its full sequence is Polyribonucleotide nucleotidyltransferase (703 aa).

2 residues coordinate Mg(2+): D485 and D491. The KH domain maps to 552–611 (PRIYTLKIDQDKIRDVIGKGGAMIRSITEASDTNIEIEDDGTIKIFATERAKADIAISKI). Positions 621–689 (GKTYEGKVTR…RQNRVRLSIK (69 aa)) constitute an S1 motif domain.

Belongs to the polyribonucleotide nucleotidyltransferase family. As to quaternary structure, component of the RNA degradosome, which is a multiprotein complex involved in RNA processing and mRNA degradation. Mg(2+) serves as cofactor.

The protein localises to the cytoplasm. It catalyses the reaction RNA(n+1) + phosphate = RNA(n) + a ribonucleoside 5'-diphosphate. In terms of biological role, involved in mRNA degradation. Catalyzes the phosphorolysis of single-stranded polyribonucleotides processively in the 3'- to 5'-direction. This is Polyribonucleotide nucleotidyltransferase from Pseudoalteromonas atlantica (strain T6c / ATCC BAA-1087).